Consider the following 71-residue polypeptide: Defensin-like protein 124 (71 aa).

Residues 1-25 (MSKPTVIVIFMAILVLGMATKETQG) form the signal peptide. 4 cysteine pairs are disulfide-bonded: cysteine 28–cysteine 71, cysteine 40–cysteine 60, cysteine 45–cysteine 65, and cysteine 49–cysteine 67.

It belongs to the DEFL family.

The protein resides in the secreted. The protein is Defensin-like protein 124 (LCR16) of Arabidopsis thaliana (Mouse-ear cress).